Here is a 419-residue protein sequence, read N- to C-terminus: Adenylosuccinate synthetase 1 (419 aa).

11–17 provides a ligand contact to GTP; sequence GDEGKGK. The active-site Proton acceptor is the aspartate 12. Mg(2+) contacts are provided by aspartate 12 and glycine 39. Residues 12–15, 37–40, arginine 138, glutamine 220, and arginine 298 each bind IMP; these read DEGK and NAGH. The active-site Proton donor is the histidine 40. 294 to 300 contacts substrate; the sequence is TVSKRPR. Residues arginine 300, 326–328, and 407–409 each bind GTP; these read NVD and SYG.

This sequence belongs to the adenylosuccinate synthetase family. Homodimer. Mg(2+) is required as a cofactor.

It is found in the cytoplasm. It catalyses the reaction IMP + L-aspartate + GTP = N(6)-(1,2-dicarboxyethyl)-AMP + GDP + phosphate + 2 H(+). It participates in purine metabolism; AMP biosynthesis via de novo pathway; AMP from IMP: step 1/2. Its function is as follows. Plays an important role in the de novo pathway of purine nucleotide biosynthesis. Catalyzes the first committed step in the biosynthesis of AMP from IMP. The sequence is that of Adenylosuccinate synthetase 1 from Photorhabdus laumondii subsp. laumondii (strain DSM 15139 / CIP 105565 / TT01) (Photorhabdus luminescens subsp. laumondii).